Here is a 193-residue protein sequence, read N- to C-terminus: Probable nicotinate-nucleotide adenylyltransferase (193 aa).

This sequence belongs to the NadD family.

It catalyses the reaction nicotinate beta-D-ribonucleotide + ATP + H(+) = deamido-NAD(+) + diphosphate. It functions in the pathway cofactor biosynthesis; NAD(+) biosynthesis; deamido-NAD(+) from nicotinate D-ribonucleotide: step 1/1. Functionally, catalyzes the reversible adenylation of nicotinate mononucleotide (NaMN) to nicotinic acid adenine dinucleotide (NaAD). This is Probable nicotinate-nucleotide adenylyltransferase from Flavobacterium psychrophilum (strain ATCC 49511 / DSM 21280 / CIP 103535 / JIP02/86).